The chain runs to 432 residues: MNLDSTALAYQSGFGNEFSSEALPGALPVGQNSPQKAPYGLYAELLSGTAFTMARSEARRTWLYRITPSAKHPPFRRLERQIAGAELDAPTPNRLRWDPLALPEQPTDFLDGLLRMAANAPGDKPAGVSIYQYLANRSMERCFYDADGELLLVPQLGRLRLCTELGALQVEPLEIAVIPRGMKFRVELLDGEARGYIAENHGAPLRLPDLGPIGSNGLANPRDFLAPVARYEDSRQPLQLVQKYLGELWACELDHSPLDVVAWHGNNVPYKYDLRRFNTIGTVSFDHPDPSIFTVLTSPTSVHGLANIDFVIFPPRWMVAENTFRPPWFHRNLMNEFMGLIQGAYDAKAGGFVPGGASLHSCMSAHGPDAESCDKAIAADLKPHRIDQTMAFMFETSQVLRPSRAALETPALQNDYDACWASLVSTFNPQRR.

His-287 serves as the catalytic Proton acceptor. Positions 330 and 336 each coordinate Fe cation. Residues Tyr-345 and His-366 each coordinate homogentisate. His-366 contributes to the Fe cation binding site.

Belongs to the homogentisate dioxygenase family. As to quaternary structure, hexamer; dimer of trimers. The cofactor is Fe cation.

It carries out the reaction homogentisate + O2 = 4-maleylacetoacetate + H(+). It functions in the pathway amino-acid degradation; L-phenylalanine degradation; acetoacetate and fumarate from L-phenylalanine: step 4/6. Its function is as follows. Involved in the catabolism of homogentisate (2,5-dihydroxyphenylacetate or 2,5-OH-PhAc), a central intermediate in the degradation of phenylalanine and tyrosine. Catalyzes the oxidative ring cleavage of the aromatic ring of homogentisate to yield maleylacetoacetate. The polypeptide is Homogentisate 1,2-dioxygenase (Pseudomonas aeruginosa (strain UCBPP-PA14)).